We begin with the raw amino-acid sequence, 488 residues long: Argininosuccinate lyase (488 aa).

The protein belongs to the lyase 1 family. Argininosuccinate lyase subfamily.

It localises to the cytoplasm. The enzyme catalyses 2-(N(omega)-L-arginino)succinate = fumarate + L-arginine. It functions in the pathway amino-acid biosynthesis; L-arginine biosynthesis; L-arginine from L-ornithine and carbamoyl phosphate: step 3/3. This Corynebacterium jeikeium (strain K411) protein is Argininosuccinate lyase.